The sequence spans 717 residues: Epithelial splicing regulatory protein 2 (717 aa).

Residues 1–14 (MTPPPPPPPPPGPD) show a composition bias toward pro residues. Residues 1-23 (MTPPPPPPPPPGPDPAVDSATDP) form a disordered region. At Ser83 the chain carries Phosphoserine. 3 RRM domains span residues 247–343 (TVVR…RFLS), 348–428 (VILR…RSTA), and 465–545 (DCVR…PCST). A Phosphoserine modification is found at Ser563.

The protein belongs to the ESRP family. In terms of assembly, interacts with RBPMS. In terms of tissue distribution, epithelial cell-specific.

It is found in the nucleus. MRNA splicing factor that regulates the formation of epithelial cell-specific isoforms. Specifically regulates the expression of FGFR2-IIIb, an epithelial cell-specific isoform of FGFR2. Also regulates the splicing of CD44, CTNND1, ENAH, 3 transcripts that undergo changes in splicing during the epithelial-to-mesenchymal transition (EMT). Acts by directly binding specific sequences in mRNAs. Binds the GU-rich sequence motifs in the ISE/ISS-3, a cis-element regulatory region present in the mRNA of FGFR2. The sequence is that of Epithelial splicing regulatory protein 2 (Esrp2) from Mus musculus (Mouse).